Consider the following 96-residue polypeptide: UPF0235 protein YggU (96 aa).

It belongs to the UPF0235 family.

The protein is UPF0235 protein YggU of Escherichia coli O157:H7.